The following is a 147-amino-acid chain: Cysteine proteinase inhibitor 2 (147 aa).

A signal peptide spans Met1 to Ala27. In terms of domain architecture, Cystatin spans Leu87–Ser117. The Secondary area of contact signature appears at Gln98–Gly102. Asn115 carries an N-linked (GlcNAc...) asparagine glycan.

The protein belongs to the cystatin family. Phytocystatin subfamily.

Its subcellular location is the secreted. Its function is as follows. Specific inhibitor of cysteine proteinases. Probably involved in the regulation of endogenous processes and in defense against pests and pathogens. This chain is Cysteine proteinase inhibitor 2 (CYS2), found in Arabidopsis thaliana (Mouse-ear cress).